The following is a 312-amino-acid chain: DNA-directed RNA polymerase subunit alpha (312 aa).

Positions 1 to 226 (MIEFEKPTIT…EHLGLFTDLT (226 aa)) are alpha N-terminal domain (alpha-NTD). An alpha C-terminal domain (alpha-CTD) region spans residues 242–312 (SDDRMLDRTI…DLGLGLKKDK (71 aa)).

This sequence belongs to the RNA polymerase alpha chain family. As to quaternary structure, homodimer. The RNAP catalytic core consists of 2 alpha, 1 beta, 1 beta' and 1 omega subunit. When a sigma factor is associated with the core the holoenzyme is formed, which can initiate transcription.

It carries out the reaction RNA(n) + a ribonucleoside 5'-triphosphate = RNA(n+1) + diphosphate. In terms of biological role, DNA-dependent RNA polymerase catalyzes the transcription of DNA into RNA using the four ribonucleoside triphosphates as substrates. This Streptococcus suis (strain 98HAH33) protein is DNA-directed RNA polymerase subunit alpha.